Consider the following 182-residue polypeptide: uncharacterized protein (182 aa).

2 consecutive transmembrane segments (helical) span residues 76–96 (LLLA…LALA) and 114–130 (LDLL…LIGA).

It is found in the membrane. This is an uncharacterized protein from Saccharomyces cerevisiae (strain ATCC 204508 / S288c) (Baker's yeast).